Here is a 43-residue protein sequence, read N- to C-terminus: VTCDLLSFEAKGFAANHSICAAHCLAIGRKGGSCQNGVCVCRN.

3 disulfide bridges follow: Cys3/Cys34, Cys20/Cys39, and Cys24/Cys41.

The protein localises to the secreted. Functionally, antibacterial protein. Strong activity against the Gram-positive bacteria M.luteus, B.megaterium and S.aureus. Reduced activity against Gram-positive bacterium B.subtilis and weak activity against Gram-negative bacterium X.japonicus. No detectable activity against the Gram-negative bacteria E.asbriae, E.coli, P.aeruginosa and S.marcescens. In Anomala cuprea (Cupreous chafer beetle), this protein is Defensin-A.